Here is a 283-residue protein sequence, read N- to C-terminus: Pantothenate synthetase (283 aa).

30-37 provides a ligand contact to ATP; the sequence is MGNLHDGH. Residue His-37 is the Proton donor of the active site. Gln-61 is a binding site for (R)-pantoate. Position 61 (Gln-61) interacts with beta-alanine. 149-152 contributes to the ATP binding site; that stretch reads GEKD. Residue Gln-155 coordinates (R)-pantoate. An ATP-binding site is contributed by 186 to 189; that stretch reads LSSR.

This sequence belongs to the pantothenate synthetase family. As to quaternary structure, homodimer.

It is found in the cytoplasm. The catalysed reaction is (R)-pantoate + beta-alanine + ATP = (R)-pantothenate + AMP + diphosphate + H(+). It participates in cofactor biosynthesis; (R)-pantothenate biosynthesis; (R)-pantothenate from (R)-pantoate and beta-alanine: step 1/1. Functionally, catalyzes the condensation of pantoate with beta-alanine in an ATP-dependent reaction via a pantoyl-adenylate intermediate. This chain is Pantothenate synthetase, found in Escherichia coli (strain SMS-3-5 / SECEC).